Reading from the N-terminus, the 382-residue chain is Succinyl-diaminopimelate desuccinylase (382 aa).

Zn(2+) is bound at residue His-70. Residue Asp-72 is part of the active site. Position 103 (Asp-103) interacts with Zn(2+). The active-site Proton acceptor is Glu-137. Glu-138, Glu-166, and His-355 together coordinate Zn(2+).

The protein belongs to the peptidase M20A family. DapE subfamily. Homodimer. Requires Zn(2+) as cofactor. It depends on Co(2+) as a cofactor.

The catalysed reaction is N-succinyl-(2S,6S)-2,6-diaminopimelate + H2O = (2S,6S)-2,6-diaminopimelate + succinate. It functions in the pathway amino-acid biosynthesis; L-lysine biosynthesis via DAP pathway; LL-2,6-diaminopimelate from (S)-tetrahydrodipicolinate (succinylase route): step 3/3. In terms of biological role, catalyzes the hydrolysis of N-succinyl-L,L-diaminopimelic acid (SDAP), forming succinate and LL-2,6-diaminopimelate (DAP), an intermediate involved in the bacterial biosynthesis of lysine and meso-diaminopimelic acid, an essential component of bacterial cell walls. The polypeptide is Succinyl-diaminopimelate desuccinylase (Paracoccus denitrificans (strain Pd 1222)).